The following is a 213-amino-acid chain: Uridine kinase (213 aa).

14–21 (GASASGKS) serves as a coordination point for ATP.

Belongs to the uridine kinase family.

It localises to the cytoplasm. The catalysed reaction is uridine + ATP = UMP + ADP + H(+). It catalyses the reaction cytidine + ATP = CMP + ADP + H(+). Its pathway is pyrimidine metabolism; CTP biosynthesis via salvage pathway; CTP from cytidine: step 1/3. The protein operates within pyrimidine metabolism; UMP biosynthesis via salvage pathway; UMP from uridine: step 1/1. The protein is Uridine kinase of Vibrio vulnificus (strain CMCP6).